The chain runs to 7354 residues: MSSSDEETLSERSCRSERSCRSERSYRSERSGSLSPCPPGDTLPWNLPLHEQKKRKSQDSVLDPAERAVVRVADERDRVQKKTFTKWVNKHLMKVRKHINDLYEDLRDGHNLISLLEVLSGIKLPREKGRMRFHRLQNVQIALDFLKQRQVKLVNIRNDDITDGNPKLTLGLIWTIILHFQISDIYISGESGDMSAKEKLLLWTQKVTAGYTGVKCTNFSSCWSDGKMFNALIHRYRPDLVDMERVQVQSNRENLEQAFEVAERLGVTRLLDAEDVDVPSPDEKSVITYVSSIYDAFPKVPEGGEGISATEVDSRWQEYQSRVDSLIPWIRQHTILMSDKSFPQNPVELKALYNQYIHFKETEILAKEREKGRIKELYKLLEVWIEFGRIKLPQGYHPNHVEEEWGKLIVEMLEREKSLRPAVERLELLLQIANKIQNGALNCEEKLTLAKNTLQADAAHLESGQPVQCESDVIMYIQECEGLIRQLQVDLQILRDEKYYQLEELAFRVMRLQDELVTLRLECTNLYRKGHFSSLELVPPSTLTTTHLKAEPLNKTTHSSSTSWFRKPMTRTELVSISSSEDEGNLRFVYELLSWVEEMQMKLERAEWGNDLPSVELQLETQQHIHTSVEELGSSVKEARLYEGKMSQNFHTSYVETLGKLETQYCKLKETSSFRMRHLQSLHKFVSRATAELIWLNGKEEEELACDWSDSNPNISAKKTYFSELTMELEGKQDVFRSLQDTAEVLSLENHPAKQTVEAYSAAVQSQLQWMKQLCLCVEQHVKENAAYFQFFSDARDLESFLRNLQDSIKRKYTCDRSTSLSRLEDLLQDSMDEKEQLIQSKSSVASLVGRSKTIVQLKPRNPDHVLKSTLSVKAICDYRQIEITICKNDECVLEDNSQRTKWKVISPTGNEAMVPSVCFLIPPPNKEAIEMASRVEQSYQKVMALWHQLHINTKSLISWNYLRKDLDTVQTWSLEKLRSLAPGECHQVMKNLQAHYEDFLQDSHDSALFSVADRLRIEEEVEACKAHFQHLMKSLENEDKEETLAKVYISELKNIRLLLEECEQRLLKQIQSPASSKTDRDARQDITLRIAEQEHTQEDLQHLRSDLDAISMKCNVFLQQSPSGSSATTLRSELNLMVEKMDHVYGLSTVYLNKLKTIDVIVRSMQDAELLVKGYEIKLSQEEAVPADLSALESHRTTLQHWLSDVKDKNSVFSVLDEEITKAKKVAEQLRHPASEPNLDLERYQEKGSQLQERWHRVIAQLETRQSEVESIQEVLRDYRACHGTLIKWIEETTAQQEMMKPGQAEDSRVLSEQLSQQTELFAEIERNQTKLDQCQKFSQQYSTIVKDYELQLMTYKAFVESQQKSPGKRRRMISSSDAITQEFMDLRTRYTALVTLTTQHVKYISDALRRLEEEEKVVEEEKQEHVEKVKDLLGWVSTLARNTQGTTTSSHTSASADIEKAILEQQVLAEELTTKKEQVSEAIKTSQIFLAKHGHKLSEGEKEQISEQLRVLNKTYHDLCDGSANQLQQLQSELAQQTEQKGCRAVAGVIDLGTVEIFPIFRAMQKGLIDQDTGLVLLESQIIMSGLIDPENSEKLSLEEGLTRNFINLPIYQQLLGLRDSLSLVSRLTGTLGSLSVVEAIEKKIISERLGLKVLEVHLATGGFSLPPSENCINLEEAFHQGFIASSLHSELQSHLRSSKNLIDPNTAEKVGLLDLMQRCIIHQESGLKLLPVKQLAGGMVSLKSGRKVSIFRAVQEGLIDRQVTVRLLEAQLFAGGIVDPRTGHRLTVEEAVRHNLIDQDMACAILIRQLQTGGIIDTVTGDRMTIDEAVTNNLVAAKIALVILESLWSFMGLLLPESGEILPITDALEQGIVSTELAHKILHNRQQIEALFLPTLTEIWSWEKATESGILDKDLVNNLRSVCIPDMMPHIQLADSAEQSKVGFAAGKPPVSGPREEGSSHGEKLLFQLMTHSYIHAHTGQRLLLLDQELVEMLTSRDDCQVILPEVFEIQHQRLNTSEALQELYTGTISQISSAKHPRKPCESQFLSQNKDYPSQENCTEAKGERSVVGIECSPAESPERELFLKEQEAIIENVGSLKVINKVKLKLQRPLLGSRKEEQAETLREENISGDPLLVECPEESEGKDLSTEKSKCQTPTKCSFTCHKEQVKTIKDIPSETGTSLIKSQNQMSQFQVDTSVGLRSEFKSEHDMNVNSLEKELKEELLVKDGHKQSQEGQSVADGQTVALEKTDTEDNADEPALLHSSPFEDATLSTLSAQLQDGGIFNEETGQKLLLNEAIAQGLVSSHTAVKLMGKLNMFRGFFDSQTCESLTTEEVIDEGLMDEKLLYNVLMSDKAISGILDPRTHSLCSVKEAVAAGLLDKETATRILEGQVITGGIVDLKRGKKLSVTLASNLGLVDTADQTELINLEKATKGRGAEKAVKERLIELQMETAGLMDPESKAPLTVLQSIDRGILEREAAVYLLTKQVLDGGIIHHISGLRLSVDNAFKHGLIGEDMARQLRKVENFIHYQFFHPQTKEALSFSEAIKLDLVSPDLKREIQEIQDFSGNLGDFIYGQKLTLAKTNKEESLANKTELPSGVMHGVIDPENCTIIPYSELVKKCRIDTESGWRYLEVIPFSDIKDEAGNNVLTPPEAIQLGKVDFASALKVLEAQANTGGIIDMATGKRVTLASALEKKLLDENMARIIASHQMLSGGIIDIYSDQRVTLNDAVEKRLISPELAAMIQVDPLAEQGGTGVCELKGDFLRKELLSESSKTPRESYSKEKHEAVLQAGSLCAPEKAGIRGSNGEKAEKGRKISVEMEGQRQDEKASSDSKVSASILSPFGFEGESSYQVSVTHPCSESCDLKPREETRSCMKKCAVVERDKVVTQIKMVSHVKQSTSGLDAEEARERQGRMVSKEQGSHYETAGNLLSERSVRVDRRVRREMGGEQSVQMSREAAVLSEEESDQEVTIGDEPDSFVKSQSMKMIGNDKGKEAGIEKDISVVCKIEGFPSQMTSKDASLTNQDALPFYTEGETKTVNLCSILKPGEKLSQETASTVQKEPLSSEIPRPERLNSQESDEEPQISDVPHISKGDMAAQITTRQETTDVQDLYITSKSSETKDKIFPSKNYIEKLHQEIPMDPTRSHKLKEATISTLETEGISYLDSSDIKSLCEDSKADHKSCGHQKSKVTTTQAKKSLEVVDLLVRDTEEGSSEDRVGQRGPRVLASLLPEKLPTRTVQSENIRQHDAVIPAISEIREEMALSLPCSVVKVDGKIPKEKHKEILGDEQGPFMAIPSGKGIEGVNPEPCRATQNVFTRRLCLEHDEKLVSYLSLLRDIEMRTKQIQPLELNVAELQDLLGQAKELDRELKDLSTVVSQELECVDRIVISQPQEVPAQLLKALEKDAKNLQKSLDSVSDSWSSRFLHLQSAVEVKKATVLNRHKELQGKLQDLRAWVGRASLTLNSKGCDTETDADSLSHTLQPYKDMKQSMAERKSQLDALALDIQLFISEHPQDLSLQQNQEMLQFLSELQRSFQGLVEHTAAQKDVVQGHLQQVQQEVQVKTLQKQQDTCHKKLEDLCNWVGQAERALERHQGGSSSGKSSLLCAEPKVDLKDLQGDIQSHSTSFATAVKDIEGFLEENQTKLSPQELTALREKLHQAKEQYEVLQERTRVAQKELEEAVTSALQQETEKSKAATELAENKRKIDALLDWVGLLWGHLRESHRLAFQEWSSSLELAMEKQTLAATDGHVDVNQVPETLDRQYELMKARHQELLSQQQNFIVATQSVQSFLDQHSHNLTPEERQKLQEKLGELKEQYAASLARSEAELKQTQALRDELQKFLQDHKEFENWLQQSENELDSMHKGGSSPEALNSLLKRQGSFSEDVISHKGDLRFVTISGQKVLETENNFEEGQEPSATRNLVNEKLKDATERYTTLHSKCIRLGSHLSMLLGQYQQFQSSADSLQAWVLTCEASVGKLLSDTVASDPGVLQQQLATTKQLQEELAEHQVPVEKLQKAAHDLLDIEGEPALDCRPIQETTDSISSRFQNLSCSLDERSALLQKAIAQSQSVQESMESLLQSIREVEQNLERDQVASLSSGVIQEALANNMKLKQDIARQKSSLEATHDMVTRFMETADSNSASVLQGKLAELSQRFQQLQLQQQEKESNLKKLLPQAEMFEQLSNKLQQFMENKSRLLASGNQPDQDIAHFSQQIQELTLAMEDQKENLDTLEHLVTTLGSCGFALDLSQHQDKIQNLKKDFTELQKTVQEREKDASTCQEQLDEFRKLIRTFQKWLKETEGNVPPAKTFVSAKELEKQIEHLKDLISDWESKGALLGEINAKGTALESLIMDITAPDSQAKTGSILPPVGSSVGSVNGYHTCKDLTEIQCDMFDVNSKYEKLWEVLRERQESLQTVFSRMEEVQKEASSVLQWLESKEEVLKAMDATLSPTKTETVKAQAESNKAFLAELEQNSPKIQKVKEALAGLLKTYPNSQEAENWKKMQEDLNSRWEKATEVTVARQKQLEESASHLACFQAAESQLRPWLMEKELMMGVLGPLSIDPNMLKQQVQFMLKEFEARRQQHEQLNEAAQGILTGPGDMSPSASQVHKDLQSISQKWVELTDKLNSRSSQIDQAIVKSTQYQDLLQDLSEKVKAIGQRLSGQSAISTQPEAVKQQLEETSEIRSDLGQLDNEIKEAQTLCQELSLLIGEQYLKDELKKRLETVALPLQGLEDLAADRMNRLQAALASTQQFQQMFDELRTWLDEKQSQQAKNCPISAKLERLQCQLQENEEFQKNLNQHSGSYEVIVAEGEALLLSVPPGEEKKTLQNQLVELRSHWEDLSKKTANRQSRLKDCMQKAQKYQGHVEDLVPWIDECKSKMSELQVTLDPVQLESSLLRSKAMLNEAEKRRSLLEILNSAADILINSSEIDEDEIRDEKAGLNQNMDAITEELQAKTSSLEEMTQRLKEFQESFKNIEKKVEGAKHQLEIFDALGSQACSNKNLEKLKAQQEVLQALEPQVDYLRNFTQGLVEDAPDGSDASPLVHQAEVAQQEFLEVKQRVSSSCLTMENKLEGIGQFHCRVREMFSQLADLDDELDGMGAIGRDTDSLQSQIEDVRLFLNKIQALRFDIEDSEAECRKMLEEEGTLDLLGLKRELEALNKQCGKLTERGKVRQEQLELTLGRVEDFYRKLKALNDAATAAEEGEALQWIVGTEVDVINQQLADFKLFQKDQVDPLQVKLQQVNGLGQGLIQSAGKNCDVQGLEHDMDEINTRWNTLNKKVAQRIAQLQEALLHCGKFQDALEPLLSWLTDTEELIANQKPPSAEYKVVKAQIQEQKLLQRLLDDRKATVDMLQAEGGRIAQSAELADREKITGQLESLERRWTDLLSKAAARQKQLEDILVLAKQFHETAEPISDFLSVTANKLANSEPVGTQTAKIHQQIIRHKALNEEIINRKKNVDQAIKNGQALLKQTTGEEVLLIQEKLDGIKTRYADITLTSSKALRTLEQARQLATKFHSTYEELTGWLREAEEELAASGGQSPTGEQIPQFQQRQKELKKEVMEHRLVLDTVNEVSHALLELVPWRAREGLDKLVSDANEQYKLISDTVGQRVDEIDAAIQRSQQYEQAADAELAWVAETKRKLMALGPIRLEQDQTTAQLQVQKAFSIDIIRHKDSMDELFSHRGEIFSTCGEEQKAVLQEKTECLIQQYEAVSLLNSERYARLERAQVLVNQFWETYEELSPWAEETLALIAQLPPPAVDHEQLRQQQEEMRQLRESIAEHKPHIDKILKIGPQLKELNPEEGKMVEEKYQKAENMYAQIKDEVRQRALALDEAVSQSAQFHDKIEPMLETLENLSSRLRMPPLIPAEVDKIRECISDNKSATVELEKLQPSFEALKRRGEELIGRSQGADKDLAAKEIQDKLDQMVFFWEDIKARSEEREIKFLDVLELAEKFWYDMAALLTTIKDTQDIVHDLESPGIDPSIIKQQVEAAETIKEETDGLHEELEFIRILGADLIFACGETEKPEVKKSIDEMNNAWENLNKTWKERLEKLEDAMQAAVQYQDTLQAMFDWLDNTVIKLCTMPPVGTDLNTVKDQLNEMKEFKVEVYQQQIEMEKLNHQGELMLKKATDETDRDIIREPLTELKHLWENLGEKIAHRQHKLEGALLALGQFQHALEELMSWLTHTEELLDAQRPISGDPKVIEVELAKHHVLKNDVLAHQATVATVNKAGSELLESSAGDDASSLRSRLETMNQCWESVLQKTEEREQQLQSTLQQAQGFHSEIEDFLLELNRMENQLSASKPTGGLPETAREQLDTHMELHSQLRAKEEIYNQLLDKGRLMLLSRGDSGSGSKTEQSVALLEQKWHAVSSKVEERKSKLEEALSLATEFQNSLQEFINWLTLAEQSLNIASPPSLILNTVLSQIEEHKVFANEVNDHRDQIIELDQTGNQLKFLSQKQDVVLIKNLLVSVQSRWEKVVQRSIERGRSLDDARKRAKQFHEAWKKLIDWLEDAESHLDSELEISNDPDKIKLQLSKHKEFQKTLGGKQPVYDTTIRTGRALKEKTLLAGDTQKLDNLLGEVRDKWDTVCGKSVERQHKLEEALLFSGQFMDALQALVDWLYKVEPQLAEDQPVHGDLDLVMNLMDAHKVFQKELGKRTGTVQVLKRSGRELIEGSRDDTTWVKGQLQELSTRWDTVCKLSVSKQSRLEQALKQAEEFRDTVHMLLEWLSEAEQTLRFRGALPDDTEALQSLIDTHKEFMKKVEEKRVDVNTAVAMGEAILAVCHPDCITTIKHWITIIRARFEEVLTWAKQHQQRLETALSELVANAELLEELLAWIQWAETTLIQRDQEPIPQNIDRVKALITEHQSFMEEMTRKQPDVDRVTKTYKRKSVEPTHAPFMEKSRSGSRKSLNQPTPPPMPILSQSEAKNPRINQLSARWQQVWLLALERQRKLNDALDRLEELCPELKEFANFDFDVWRKKYMRWMNHKKSRVMDFFRRIDKDQDGKITRQEFIDGILASKFPTTKLEMTAVADIFDRDGDGYIDYYEFVAALHPNKDAYRPTTDADKIEDEVTRQVAQCKCAKRFQVEQIGENKYRFFLGNQFGDSQQLRLVRILRSTVMVRVGGGWMALDEFLVKNDPCRARGRTNIELREKFILPEGASQGMTPFRSRGRRSKPSSRAASPTRSSSSASQSNHSCTSMPSSPATPASGTKVISSSGSKLKRPTPAFHSSRTSLAGDTSNSSSPASTGAKANRADPKKSASRPGSRAGSRAGSRASSRRGSDASDFDLLETQSACSDTSESSAAGGQGSSRRGLTKPSKIPTMSKKTTTASPRTPGPKR.

A disordered region spans residues 1–47; the sequence is MSSSDEETLSERSCRSERSCRSERSYRSERSGSLSPCPPGDTLPWNL. The segment at 1–295 is actin-binding; sequence MSSSDEETLS…VITYVSSIYD (295 aa). Ser-4 carries the post-translational modification Phosphoserine. Basic and acidic residues predominate over residues 9 to 30; that stretch reads LSERSCRSERSCRSERSYRSER. A Phosphoserine modification is found at Ser-35. At Thr-42 the chain carries Phosphothreonine. Ser-57 carries the phosphoserine modification. 2 Calponin-homology (CH) domains span residues 78-181 and 194-298; these read RVQK…LHFQ and MSAK…DAFP. One copy of the LRR 1 repeat lies at 148–171; the sequence is QRQVKLVNIRNDDITDGNPKLTLG. A Phosphoserine modification is found at Ser-280. LRR repeat units follow at residues 377–399 and 441–464; these read LYKLLEVWIEFGRIKLPQGYHPN and LNCEEKLTLAKNTLQADAAHLESG. Residues 868–925 form the SH3 domain; that stretch reads KSTLSVKAICDYRQIEITICKNDECVLEDNSQRTKWKVISPTGNEAMVPSVCFLIPPP. An LRR 5 repeat occupies 1050-1073; sequence ISELKNIRLLLEECEQRLLKQIQS. Position 1122 is a phosphoserine (Ser-1122). 3 LRR repeats span residues 1128–1154, 1187–1210, and 1257–1282; these read ATTLRSELNLMVEKMDHVYGLSTVYLN, PADLSALESHRTTLQHWLSDVKDK, and HRVIAQLETRQSEVESIQEVLRDYRA. Residues Ser-1367 and Ser-1376 each carry the phosphoserine modification. 5 Plectin repeats span residues 1577-1619, 1654-1696, 1769-1809, 1811-1848, and 1855-1885; these read LVLL…QLLG, LKVL…ELQS, RLLE…CAIL, RQLQTGGIIDTVTGDRMTIDEAVTNNLVAAKIALVILE, and GLLLPESGEILPITDALEQGIVSTELAHKIL. Phosphoserine occurs at positions 2051, 2077, and 2081. 2 stretches are compositionally biased toward basic and acidic residues: residues 2120–2131 and 2145–2155; these read KEEQAETLREEN and SEGKDLSTEKS. The tract at residues 2120 to 2155 is disordered; the sequence is KEEQAETLREENISGDPLLVECPEESEGKDLSTEKS. 5 Plectin repeats span residues 2276 to 2316, 2352 to 2393, 2394 to 2425, 2487 to 2528, and 2671 to 2715; these read STLS…VKLM, NVLM…RILE, GQVITGGIVDLKRGKKLSVTLASNLGLVDTAD, LLTK…LRKV, and LKVL…ASHQ. Disordered stretches follow at residues 2806–2841, 2951–2978, and 3058–3099; these read AGIRGSNGEKAEKGRKISVEMEGQRQDEKASSDSKV, EMGGEQSVQMSREAAVLSEEESDQEVTI, and SQET…HISK. Positions 2812–2837 are enriched in basic and acidic residues; sequence NGEKAEKGRKISVEMEGQRQDEKASS. Over residues 2968–2978 the composition is skewed to acidic residues; that stretch reads SEEESDQEVTI. 2 positions are modified to phosphoserine: Ser-3082 and Ser-3085. LRR repeat units follow at residues 3225 to 3244, 3606 to 3630, and 3657 to 3681; these read VGQRGPRVLASLLPEKLPTR, SGKSSLLCAEPKVDLKDLQGDIQSH, and LTALREKLHQAKEQYEVLQERTRVA. Spectrin repeat units follow at residues 3845–3920 and 3962–4070; these read ELQK…NFEE and QYQQ…ALLQ. Position 3889 is a phosphoserine (Ser-3889). The stretch at 3898–3920 is one LRR 12 repeat; it reads KGDLRFVTISGQKVLETENNFEE. LRR repeat units lie at residues 4087 to 4112 and 4223 to 4249; these read LQSIREVEQNLERDQVASLSSGVIQE and IQELTLAMEDQKENLDTLEHLVTTLGS. A Spectrin 3 repeat occupies 4428-4536; that stretch reads RMEEVQKEAS…TVARQKQLEE (109 aa). Phosphoserine is present on residues Ser-4458 and Ser-4483. 3 LRR repeats span residues 4473-4496, 4563-4583, and 4728-4751; these read KAFLAELEQNSPKIQKVKEALAGL, GVLGPLSIDPNMLKQQVQFML, and KKRLETVALPLQGLEDLAADRMNR. Residues 4759 to 4863 form a Spectrin 4 repeat; sequence TQQFQQMFDE…KTANRQSRLK (105 aa). Phosphoserine is present on Ser-4921. LRR repeat units lie at residues 5010 to 5035, 5131 to 5153, and 5240 to 5263; these read NKNLEKLKAQQEVLQALEPQVDYLRN, NKIQALRFDIEDSEAECRKMLEE, and KDQVDPLQVKLQQVNGLGQGLIQS. Spectrin repeat units lie at residues 5195 to 5300, 5307 to 5409, 5414 to 5506, 5631 to 5735, 5742 to 5844, 5961 to 6066, 6071 to 6175, 6181 to 6284, 6289 to 6395, 6400 to 6503, 6508 to 6614, 6621 to 6722, and 6726 to 6830; these read EDFY…QLQE, KFQD…QLED, AKQF…ADIT, RSQQ…ARLE, NQFW…ALDE, LAEK…KLED, AVQY…HKLE, LGQF…QQLQ, QAQG…KLEE, ATEF…RSLD, RAKQ…KLEE, QFMD…RLEQ, and QAEE…QRLE. Thr-5394 bears the Phosphothreonine mark. LRR repeat units follow at residues 5654–5678 and 5763–5787; these read MALGPIRLEQDQTTAQLQVQKAFSI and AQLPPPAVDHEQLRQQQEEMRQLRE. Position 5988 is a phosphoserine (Ser-5988). Position 6166 is an N6-acetyllysine (Lys-6166). The LRR 23 repeat unit spans residues 6452-6475; it reads RDQIIELDQTGNQLKFLSQKQDVV. The tract at residues 6904-6937 is disordered; sequence SVEPTHAPFMEKSRSGSRKSLNQPTPPPMPILSQ. Position 6923 is a phosphoserine (Ser-6923). 2 EF-hand domains span residues 7001–7036 and 7037–7072; these read HKKSRVMDFFRRIDKDQDGKITRQEFIDGILASKFP and TTKLEMTAVADIFDRDGDGYIDYYEFVAALHPNKDA. The Ca(2+) site is built by Asp-7014, Asp-7016, Asp-7018, Lys-7020, Glu-7025, Asp-7050, Asp-7052, Asp-7054, Tyr-7056, and Glu-7061. The 79-residue stretch at 7077–7155 folds into the GAR domain; that stretch reads TDADKIEDEV…EFLVKNDPCR (79 aa). Residues 7077–7354 form a C-terminal tail region; that stretch reads TDADKIEDEV…ASPRTPGPKR (278 aa). Positions 7171 to 7354 are disordered; that stretch reads PEGASQGMTP…ASPRTPGPKR (184 aa). The segment covering 7191–7225 has biased composition (low complexity); that stretch reads SSRAASPTRSSSSASQSNHSCTSMPSSPATPASGT. At Thr-7220 the chain carries Phosphothreonine. The segment covering 7242–7261 has biased composition (polar residues); that stretch reads FHSSRTSLAGDTSNSSSPAS. A phosphoserine mark is found at Ser-7245 and Ser-7258. Low complexity predominate over residues 7276–7290; sequence SRPGSRAGSRAGSRA. The 4 X 4 AA tandem repeats of [GS]-S-R-[AR] stretch occupies residues 7279-7294; that stretch reads GSRAGSRAGSRASSRR. Phosphoserine occurs at positions 7296 and 7299. Residues 7305 to 7315 show a composition bias toward polar residues; the sequence is ETQSACSDTSE. Residues 7316 to 7327 show a composition bias toward low complexity; the sequence is SSAAGGQGSSRR.

It belongs to the plakin or cytolinker family. In terms of assembly, interacts with AXIN1, LRP6 and GOLGA4. Found in a complex composed of MACF1, APC, AXIN1, CTNNB1 and GSK3B. Interacts with MAPRE1, CLASP1 and CLASP2. Interacts with CAMSAP3. Post-translationally, phosphorylated on serine residues in the C-terminal tail by GSK3B. Phosphorylation inhibits microtubule-binding and this plays a critical role in bulge stem cell migration and skin wound repair. Wnt-signaling can repress phosphorylation. In terms of tissue distribution, enriched in the hair follicle stem cells (at protein level). Isoform 1 and isoform 2 are ubiquitous expressed, with higher levels seen in lung, heart, thymus, spleen and brain.

Its subcellular location is the cytoplasm. It is found in the cytoskeleton. It localises to the golgi apparatus. The protein localises to the cell membrane. The protein resides in the cell projection. Its subcellular location is the ruffle membrane. F-actin-binding protein which plays a role in cross-linking actin to other cytoskeletal proteins and also binds to microtubules. Plays an important role in ERBB2-dependent stabilization of microtubules at the cell cortex. Acts as a positive regulator of Wnt receptor signaling pathway and is involved in the translocation of AXIN1 and its associated complex (composed of APC, CTNNB1 and GSK3B) from the cytoplasm to the cell membrane. Has actin-regulated ATPase activity and is essential for controlling focal adhesions (FAs) assembly and dynamics. Interaction with CAMSAP3 at the minus ends of non-centrosomal microtubules tethers microtubules minus-ends to actin filaments, regulating focal adhesion size and cell migration. May play role in delivery of transport vesicles containing GPI-linked proteins from the trans-Golgi network through its interaction with GOLGA4. Plays a key role in wound healing and epidermal cell migration. Required for efficient upward migration of bulge cells in response to wounding and this function is primarily rooted in its ability to coordinate microtubule dynamics and polarize hair follicle stem cells. As a regulator of actin and microtubule arrangement and stabilization, it plays an essential role in neurite outgrowth, branching and spine formation during brain development. The protein is Microtubule-actin cross-linking factor 1, isoforms 1/2/3/4 of Mus musculus (Mouse).